Reading from the N-terminus, the 523-residue chain is Rho guanine nucleotide exchange factor 8 (523 aa).

Residues 44 to 57 (VESNTPESQNSDSF) show a composition bias toward polar residues. 2 disordered regions span residues 44–83 (VESN…ERQQ) and 442–523 (ETSD…KDRH). Residues 76 to 440 (GKRSERQQAD…TLALKQTLLA (365 aa)) form the PRONE domain. Basic and acidic residues predominate over residues 465 to 475 (EAEKHDPHSKT).

As to quaternary structure, homodimer. The homodimer interacts with ARAC5/ROP4. Interacts with ARAC11/ROP1 and ARAC10/ROP11. Interacts with PRK6. Expressed in pollen grains and pollen tubes.

It localises to the cell membrane. Guanine-nucleotide exchange factor (GEF) that acts as an activator of Rop (Rho of plants) GTPases by promoting the exchange of GDP for GTP. Active as homodimer. The protein is Rho guanine nucleotide exchange factor 8 of Arabidopsis thaliana (Mouse-ear cress).